The primary structure comprises 182 residues: MNIRCARVDDLMSMQNANLMCLPENYQMKYYFYHALSWPQLSYIAEDHKGNVVGYVLAKMEEDPGEEPHGHITSLAVKRSYRRLGLANKMMDQTARAMVETYNAKYVSLHVRVSNRAALNLYKNTLKFEIVDTEPKYYADGEDAYAMRRDLAKWAEERNIEPADREAYTTAKTTDDKKKNRS.

Positions 1 to 152 constitute an N-acetyltransferase domain; sequence MNIRCARVDD…DAYAMRRDLA (152 aa). A disordered region spans residues 162-182; sequence PADREAYTTAKTTDDKKKNRS.

Belongs to the acetyltransferase family. ARD1 subfamily. Component of the N-terminal acetyltransferase A (NatA) complex. Expressed in head and tail hypodermal cells, hypodermal seam cells, pharynx, intestine and head and tail neurons.

It catalyses the reaction N-terminal glycyl-[protein] + acetyl-CoA = N-terminal N(alpha)-acetylglycyl-[protein] + CoA + H(+). The catalysed reaction is N-terminal L-alanyl-[protein] + acetyl-CoA = N-terminal N(alpha)-acetyl-L-alanyl-[protein] + CoA + H(+). The enzyme catalyses N-terminal L-seryl-[protein] + acetyl-CoA = N-terminal N(alpha)-acetyl-L-seryl-[protein] + CoA + H(+). It carries out the reaction N-terminal L-valyl-[protein] + acetyl-CoA = N-terminal N(alpha)-acetyl-L-valyl-[protein] + CoA + H(+). It catalyses the reaction N-terminal L-cysteinyl-[protein] + acetyl-CoA = N-terminal N(alpha)-acetyl-L-cysteinyl-[protein] + CoA + H(+). The catalysed reaction is N-terminal L-threonyl-[protein] + acetyl-CoA = N-terminal N(alpha)-acetyl-L-threonyl-[protein] + CoA + H(+). Functionally, catalytic subunit of the N-terminal acetyltransferase A (NatA) complex which displays alpha (N-terminal) acetyltransferase activity. Plays a role in regulating larval development, metabolism and longevity. Functions downstream or alongside daf-3, daf-12 and daf-16 in the dauer formation pathway. Functions upstream of daf-15 to enable animal development. The polypeptide is N-alpha-acetyltransferase daf-31 (Caenorhabditis elegans).